Consider the following 330-residue polypeptide: Mycothiol acetyltransferase (330 aa).

N-acetyltransferase domains follow at residues 5 to 142 (LVTD…MPLR) and 171 to 328 (VRLR…APRP). Residue Glu36 coordinates 1D-myo-inositol 2-(L-cysteinylamino)-2-deoxy-alpha-D-glucopyranoside. 80-82 (VVV) lines the acetyl-CoA pocket. The interval 142–161 (RDIAGDEPGGPWEAPELPEP) is disordered. The 1D-myo-inositol 2-(L-cysteinylamino)-2-deoxy-alpha-D-glucopyranoside site is built by Glu198, Lys238, and Glu254. Acetyl-CoA is bound by residues 258–260 (VGV) and 265–271 (QGSGLGR). Tyr292 lines the 1D-myo-inositol 2-(L-cysteinylamino)-2-deoxy-alpha-D-glucopyranoside pocket. 297 to 302 (NEAAVR) is an acetyl-CoA binding site.

Belongs to the acetyltransferase family. MshD subfamily. In terms of assembly, monomer.

The enzyme catalyses 1D-myo-inositol 2-(L-cysteinylamino)-2-deoxy-alpha-D-glucopyranoside + acetyl-CoA = mycothiol + CoA + H(+). In terms of biological role, catalyzes the transfer of acetyl from acetyl-CoA to desacetylmycothiol (Cys-GlcN-Ins) to form mycothiol. The protein is Mycothiol acetyltransferase of Nocardiopsis dassonvillei (strain ATCC 23218 / DSM 43111 / CIP 107115 / JCM 7437 / KCTC 9190 / NBRC 14626 / NCTC 10488 / NRRL B-5397 / IMRU 509) (Actinomadura dassonvillei).